The sequence spans 130 residues: Anti-adapter protein IraD (130 aa).

It belongs to the GpW/Gp25 family. IraD subfamily. Interacts with RssB.

The protein localises to the cytoplasm. Functionally, inhibits RpoS proteolysis by regulating RssB activity, thereby increasing the stability of the sigma stress factor RpoS during oxidative stress. Its effect on RpoS stability is due to its interaction with RssB, which probably blocks the interaction of RssB with RpoS, and the consequent delivery of the RssB-RpoS complex to the ClpXP protein degradation pathway. In Escherichia coli O7:K1 (strain IAI39 / ExPEC), this protein is Anti-adapter protein IraD.